Consider the following 605-residue polypeptide: DNA primase (605 aa).

The CHC2-type zinc-finger motif lies at 38–62 (CPFHDEKTPSFTVSEDKQICHCFGC). The region spanning 260–341 (DEIVLLEGFM…NVFVIQLPSG (82 aa)) is the Toprim domain. E266, D310, and D312 together coordinate Mg(2+).

The protein belongs to the DnaG primase family. As to quaternary structure, monomer. Interacts with DnaB. The cofactor is Zn(2+). Mg(2+) is required as a cofactor.

It catalyses the reaction ssDNA + n NTP = ssDNA/pppN(pN)n-1 hybrid + (n-1) diphosphate.. Its function is as follows. RNA polymerase that catalyzes the synthesis of short RNA molecules used as primers for DNA polymerase during DNA replication. The polypeptide is DNA primase (Staphylococcus aureus (strain Mu50 / ATCC 700699)).